We begin with the raw amino-acid sequence, 364 residues long: tRNA (adenine(58)-N(1))-methyltransferase catalytic subunit trm61 (364 aa).

Residues 114–116 (SAS), E135, R140, 167–168 (DV), and D186 contribute to the S-adenosyl-L-methionine site. The interval 280–309 (EQNLSSDAKVEDQDNDSMLGENKSSVSTET) is disordered.

Belongs to the class I-like SAM-binding methyltransferase superfamily. TRM61 family. In terms of assembly, heterotetramer; composed of two copies of TRM6 and two copies of TRM61.

Its subcellular location is the nucleus. It catalyses the reaction adenosine(58) in tRNA + S-adenosyl-L-methionine = N(1)-methyladenosine(58) in tRNA + S-adenosyl-L-homocysteine + H(+). Catalytic subunit of tRNA (adenine-N(1)-)-methyltransferase, which catalyzes the formation of N(1)-methyladenine at position 58 (m1A58) in initiator methionyl-tRNA. The chain is tRNA (adenine(58)-N(1))-methyltransferase catalytic subunit trm61 (cpd1) from Schizosaccharomyces pombe (strain 972 / ATCC 24843) (Fission yeast).